Here is a 399-residue protein sequence, read N- to C-terminus: Dual-specificity RNA methyltransferase RlmN (399 aa).

The active-site Proton acceptor is E121. A Radical SAM core domain is found at 127–376 (DVDRGTLCVS…VRTPRGRDIL (250 aa)). The cysteines at positions 134 and 379 are disulfide-linked. Positions 141, 145, and 148 each coordinate [4Fe-4S] cluster. Residues 205–206 (GE), S237, 259–261 (SLH), and N336 contribute to the S-adenosyl-L-methionine site. Catalysis depends on C379, which acts as the S-methylcysteine intermediate.

The protein belongs to the radical SAM superfamily. RlmN family. The cofactor is [4Fe-4S] cluster.

It is found in the cytoplasm. The enzyme catalyses adenosine(2503) in 23S rRNA + 2 reduced [2Fe-2S]-[ferredoxin] + 2 S-adenosyl-L-methionine = 2-methyladenosine(2503) in 23S rRNA + 5'-deoxyadenosine + L-methionine + 2 oxidized [2Fe-2S]-[ferredoxin] + S-adenosyl-L-homocysteine. It carries out the reaction adenosine(37) in tRNA + 2 reduced [2Fe-2S]-[ferredoxin] + 2 S-adenosyl-L-methionine = 2-methyladenosine(37) in tRNA + 5'-deoxyadenosine + L-methionine + 2 oxidized [2Fe-2S]-[ferredoxin] + S-adenosyl-L-homocysteine. Its function is as follows. Specifically methylates position 2 of adenine 2503 in 23S rRNA and position 2 of adenine 37 in tRNAs. m2A2503 modification seems to play a crucial role in the proofreading step occurring at the peptidyl transferase center and thus would serve to optimize ribosomal fidelity. The polypeptide is Dual-specificity RNA methyltransferase RlmN (Methylocella silvestris (strain DSM 15510 / CIP 108128 / LMG 27833 / NCIMB 13906 / BL2)).